The primary structure comprises 395 residues: Dual specificity mitogen-activated protein kinase kinase 1 (395 aa).

The interval 1 to 24 (MPKKKPTPIQLNPNPEGTAVNGTP) is disordered. Over residues 9–24 (IQLNPNPEGTAVNGTP) the composition is skewed to polar residues. In terms of domain architecture, Protein kinase spans 68 to 363 (FEKVSELGAG…LKQLMVHSFI (296 aa)). ATP-binding positions include 74–82 (LGAGNGGVV) and Lys97. Asp190 (proton acceptor) is an active-site residue. A phosphoserine; by RAF mark is found at Ser218 and Ser222. Residues 284–305 (ASSELAPRPRPPGRPISSYGPD) form a disordered region.

It belongs to the protein kinase superfamily. STE Ser/Thr protein kinase family. MAP kinase kinase subfamily. Post-translationally, activated by phosphorylation on Ser/Thr catalyzed by MAP kinase kinase kinases (RAF or MOS). As to expression, expressed in the central nervous system, kidney, liver, intestine and the hematopoietic system.

It localises to the cytoplasm. Its subcellular location is the cytoskeleton. It is found in the microtubule organizing center. The protein localises to the centrosome. The protein resides in the spindle pole body. It localises to the nucleus. It catalyses the reaction L-seryl-[protein] + ATP = O-phospho-L-seryl-[protein] + ADP + H(+). The catalysed reaction is L-threonyl-[protein] + ATP = O-phospho-L-threonyl-[protein] + ADP + H(+). The enzyme catalyses L-tyrosyl-[protein] + ATP = O-phospho-L-tyrosyl-[protein] + ADP + H(+). Dual specificity protein kinase which acts as an essential component of the MAP kinase signal transduction pathway. Binding of extracellular ligands such as growth factors, cytokines and hormones to their cell-surface receptors activates the MAPK/ERK cascade, ultimately leading to phosphorylation of a threonine and a tyrosine residue in a Thr-Glu-Tyr sequence located in MAP kinases. Depending on the cellular context, this pathway mediates diverse biological functions such as cell growth, adhesion, survival and differentiation predominantly through the regulation of transcription, metabolism and cytoskeletal rearrangements. In Xenopus laevis (African clawed frog), this protein is Dual specificity mitogen-activated protein kinase kinase 1 (map2k1).